An 81-amino-acid chain; its full sequence is Omega-conotoxin-like TxMKLT1-0223 (81 aa).

The signal sequence occupies residues 1–22 (MKLTCMMIVAVLFLTAWTFVTA). A propeptide spanning residues 23–52 (VPHSSNALENLYLKARHEMENPEASKLNTR) is cleaved from the precursor. Cystine bridges form between Cys-55/Cys-72, Cys-62/Cys-76, and Cys-71/Cys-80.

It belongs to the conotoxin O1 superfamily. As to expression, expressed by the venom duct.

It localises to the secreted. Omega-conotoxins act at presynaptic membranes, they bind and block voltage-gated calcium channels (Cav). The sequence is that of Omega-conotoxin-like TxMKLT1-0223 from Conus textile (Cloth-of-gold cone).